Here is a 327-residue protein sequence, read N- to C-terminus: Annexin A8 (327 aa).

Annexin repeat units follow at residues 21–92 (FNPD…ALMY), 93–164 (PPYR…CLLQ), 177–249 (GLAL…TVVK), and 253–324 (NLHG…NLVG). Residues M266, G268, G270, and D310 each contribute to the Ca(2+) site.

It belongs to the annexin family.

Functionally, this protein is an anticoagulant protein that acts as an indirect inhibitor of the thromboplastin-specific complex, which is involved in the blood coagulation cascade. The chain is Annexin A8 (ANXA8) from Bos taurus (Bovine).